Consider the following 341-residue polypeptide: MKALVKSKSQPGLWLEEIPEPAIGINDVLIRVLRTGICGTDVHIYKWDEWARETIHVPMAIGHEFVGRIEAVGSNVADFFPGDIVSGEGHVVCGRCRNCFAGRRHLCAKTMGVGVNRPGAFAEYIALPMTNIWRHHEGIDLDVAAIFDPFGNAVHTALSFPVLGEDVLITGAGPIGIMAAAVARHAAARYTVITDLNPYRLELAAKLGVTRAVNVREQKLGDVQKELGMTEGFDVGLEMSGNPAGFRDMLANMSHGAKIAMLGIPAGEMAIDWRTVIFNMLTIKGIYGREMYETWYKMSVMLQSGLDISPVITHRYHYTDFEKGFEVMSSGNSGKVILSWD.

Residue Cys38 coordinates Zn(2+). Catalysis depends on charge relay system residues Thr40 and His43. Zn(2+)-binding residues include His63, Glu64, Cys93, Cys96, Cys99, and Cys107. NAD(+) is bound by residues Ile175, Asp195, Arg200, 262–264, and 286–287; these read LGI and IY.

Belongs to the zinc-containing alcohol dehydrogenase family. As to quaternary structure, homotetramer. Zn(2+) serves as cofactor.

Its subcellular location is the cytoplasm. The catalysed reaction is L-threonine + NAD(+) = (2S)-2-amino-3-oxobutanoate + NADH + H(+). Its pathway is amino-acid degradation; L-threonine degradation via oxydo-reductase pathway; glycine from L-threonine: step 1/2. Functionally, catalyzes the NAD(+)-dependent oxidation of L-threonine to 2-amino-3-ketobutyrate. The sequence is that of L-threonine 3-dehydrogenase from Solibacter usitatus (strain Ellin6076).